The primary structure comprises 438 residues: Enolase (438 aa).

Residues H159 and E168 each coordinate substrate. The active-site Proton donor is E211. The Mg(2+) site is built by D246, E297, and D322. The substrate site is built by E297 and D322. Residue K347 is the Proton acceptor of the active site. Substrate is bound by residues 374-377 (SHRS) and K398.

Belongs to the enolase family. As to quaternary structure, homodimer. It depends on Mg(2+) as a cofactor.

It localises to the cytoplasm. It carries out the reaction (2R)-2-phosphoglycerate = phosphoenolpyruvate + H2O. It functions in the pathway carbohydrate degradation; glycolysis; pyruvate from D-glyceraldehyde 3-phosphate: step 4/5. The sequence is that of Enolase (ENO) from Alternaria alternata (Alternaria rot fungus).